We begin with the raw amino-acid sequence, 158 residues long: UPF0262 protein Rsph17025_0594 (158 aa).

This sequence belongs to the UPF0262 family.

The protein is UPF0262 protein Rsph17025_0594 of Cereibacter sphaeroides (strain ATCC 17025 / ATH 2.4.3) (Rhodobacter sphaeroides).